The chain runs to 215 residues: Pyridoxine/pyridoxamine 5'-phosphate oxidase (215 aa).

Substrate-binding positions include 9–12 and K69; that span reads RRDY. FMN contacts are provided by residues 64-69, 79-80, K86, and Q108; these read RVLLLK and FT. Substrate contacts are provided by Y126, R130, and S134. Residues 143-144 and W188 contribute to the FMN site; that span reads QS. 194–196 is a binding site for substrate; the sequence is RLH. R198 contributes to the FMN binding site.

This sequence belongs to the pyridoxamine 5'-phosphate oxidase family. Homodimer. The cofactor is FMN.

The enzyme catalyses pyridoxamine 5'-phosphate + O2 + H2O = pyridoxal 5'-phosphate + H2O2 + NH4(+). It catalyses the reaction pyridoxine 5'-phosphate + O2 = pyridoxal 5'-phosphate + H2O2. It participates in cofactor metabolism; pyridoxal 5'-phosphate salvage; pyridoxal 5'-phosphate from pyridoxamine 5'-phosphate: step 1/1. The protein operates within cofactor metabolism; pyridoxal 5'-phosphate salvage; pyridoxal 5'-phosphate from pyridoxine 5'-phosphate: step 1/1. In terms of biological role, catalyzes the oxidation of either pyridoxine 5'-phosphate (PNP) or pyridoxamine 5'-phosphate (PMP) into pyridoxal 5'-phosphate (PLP). The polypeptide is Pyridoxine/pyridoxamine 5'-phosphate oxidase (Pseudomonas entomophila (strain L48)).